A 200-amino-acid polypeptide reads, in one-letter code: dTTP/UTP pyrophosphatase (200 aa).

Residue Asp-81 is the Proton acceptor of the active site.

This sequence belongs to the Maf family. YhdE subfamily. The cofactor is a divalent metal cation.

The protein resides in the cytoplasm. It carries out the reaction dTTP + H2O = dTMP + diphosphate + H(+). The enzyme catalyses UTP + H2O = UMP + diphosphate + H(+). Nucleoside triphosphate pyrophosphatase that hydrolyzes dTTP and UTP. May have a dual role in cell division arrest and in preventing the incorporation of modified nucleotides into cellular nucleic acids. The polypeptide is dTTP/UTP pyrophosphatase (Albidiferax ferrireducens (strain ATCC BAA-621 / DSM 15236 / T118) (Rhodoferax ferrireducens)).